We begin with the raw amino-acid sequence, 226 residues long: UPF0758 protein SPJ_1027 (226 aa).

The MPN domain occupies 103–225; sequence SILSSQKLAK…YFSYREKTDL (123 aa). Positions 174, 176, and 187 each coordinate Zn(2+). A JAMM motif motif is present at residues 174–187; it reads HNHPSGAVAPSQND.

It belongs to the UPF0758 family.

The chain is UPF0758 protein SPJ_1027 from Streptococcus pneumoniae (strain JJA).